Consider the following 364-residue polypeptide: MAAISTSIPVISQPQFTAMNEPQCFYNESIAFFYNRSGKHLATEWNTVSKLVMGLGITVCIFIMLANLLVMVAIYVNRRFHFPIYYLMANLAAADFFAGLAYFYLMFNTGPNTRRLTVSTWLLRQGLIDTSLTASVANLLAIAIERHITVFRMQLHTRMSNRRVVVVIVVIWTMAIVMGAIPSVGWNCICDIENCSNMAPLYSDSYLVFWAIFNLVTFVVMVVLYAHIFGYVRQRTMRMSRHSSGPRRNRDTMMSLLKTVVIVLGAFIICWTPGLVLLLLDVCCPQCDVLAYEKFFLLLAEFNSAMNPIIYSYRDKEMSATFRQILCCQRSENPTGPTEGSDRSASSLNHTILAGVHSNDHSVV.

The Extracellular segment spans residues 1–50 (MAAISTSIPVISQPQFTAMNEPQCFYNESIAFFYNRSGKHLATEWNTVSK). Disulfide bonds link C24-C190 and C188-C195. N-linked (GlcNAc...) asparagine glycosylation is found at N27 and N35. Residue K39 participates in a 1-acyl-sn-glycero-3-phosphate binding. The helical transmembrane segment at 51 to 75 (LVMGLGITVCIFIMLANLLVMVAIY) threads the bilayer. At 76 to 83 (VNRRFHFP) the chain is on the cytoplasmic side. Residues 84 to 107 (IYYLMANLAAADFFAGLAYFYLMF) traverse the membrane as a helical segment. Residues 108–121 (NTGPNTRRLTVSTW) lie on the Extracellular side of the membrane. A helical transmembrane segment spans residues 122 to 144 (LLRQGLIDTSLTASVANLLAIAI). 124–129 (RQGLID) contributes to the a 1-acyl-sn-glycero-3-phosphate binding site. Topologically, residues 145–163 (ERHITVFRMQLHTRMSNRR) are cytoplasmic. Residues 164 to 184 (VVVVIVVIWTMAIVMGAIPSV) form a helical membrane-spanning segment. Topologically, residues 185–204 (GWNCICDIENCSNMAPLYSD) are extracellular. The helical transmembrane segment at 205 to 225 (SYLVFWAIFNLVTFVVMVVLY) threads the bilayer. W210 provides a ligand contact to a 1-acyl-sn-glycero-3-phosphate. The Cytoplasmic portion of the chain corresponds to 226 to 255 (AHIFGYVRQRTMRMSRHSSGPRRNRDTMMS). The chain crosses the membrane as a helical span at residues 256–280 (LLKTVVIVLGAFIICWTPGLVLLLL). Topologically, residues 281 to 294 (DVCCPQCDVLAYEK) are extracellular. C284 and C287 are joined by a disulfide. A helical transmembrane segment spans residues 295–315 (FFLLLAEFNSAMNPIIYSYRD). Residues 316 to 364 (KEMSATFRQILCCQRSENPTGPTEGSDRSASSLNHTILAGVHSNDHSVV) are Cytoplasmic-facing. Residue S341 is modified to Phosphoserine. Phosphothreonine is present on T351.

Belongs to the G-protein coupled receptor 1 family. Interacts with RALA and GRK2. Interacts with GNAQ and GNA13. Interacts with CD14; the interaction is enhanced by exposure to bacterial lipopolysaccharide (LPS). N-glycosylated. In terms of tissue distribution, expressed in many adult organs, including brain, heart, colon, small intestine, placenta, prostate, ovary, pancreas, testes, spleen, skeletal muscle, and kidney. Little or no expression in liver, lung, thymus, or peripheral blood leukocytes. Detected in lung fibroblasts from bronchoalveolar fluid from patients with idiopathic pulmonary fibrosis. Detected in bone marrow-derived mesenchymal stem cells.

It localises to the cell surface. Its subcellular location is the cell membrane. The protein localises to the endosome. In terms of biological role, receptor for lysophosphatidic acid (LPA). Plays a role in the reorganization of the actin cytoskeleton, cell migration, differentiation and proliferation, and thereby contributes to the responses to tissue damage and infectious agents. Activates downstream signaling cascades via the G(i)/G(o), G(12)/G(13), and G(q) families of heteromeric G proteins. Signaling inhibits adenylyl cyclase activity and decreases cellular cAMP levels. Signaling triggers an increase of cytoplasmic Ca(2+) levels. Activates RALA; this leads to the activation of phospholipase C (PLC) and the formation of inositol 1,4,5-trisphosphate. Signaling mediates activation of down-stream MAP kinases. Contributes to the regulation of cell shape. Promotes Rho-dependent reorganization of the actin cytoskeleton in neuronal cells and neurite retraction. Promotes the activation of Rho and the formation of actin stress fibers. Promotes formation of lamellipodia at the leading edge of migrating cells via activation of RAC1. Through its function as LPA receptor, plays a role in chemotaxis and cell migration, including responses to injury and wounding. Plays a role in triggering inflammation in response to bacterial lipopolysaccharide (LPS) via its interaction with CD14. Promotes cell proliferation in response to LPA. Inhibits the intracellular ciliogenesis pathway in response to LPA and through AKT1 activation. Required for normal skeleton development. May play a role in osteoblast differentiation. Required for normal brain development. Required for normal proliferation, survival and maturation of newly formed neurons in the adult dentate gyrus. Plays a role in pain perception and in the initiation of neuropathic pain. The chain is Lysophosphatidic acid receptor 1 (LPAR1) from Homo sapiens (Human).